Consider the following 141-residue polypeptide: UPF0310 protein SSA_0254 (141 aa).

The protein belongs to the UPF0310 family.

This Streptococcus sanguinis (strain SK36) protein is UPF0310 protein SSA_0254.